The primary structure comprises 89 residues: Alpha-latrotoxin associated low molecular weight protein SGV242-280 (89 aa).

An N-terminal signal peptide occupies residues Met1–Cys18.

This sequence belongs to the arthropod CHH/MIH/GIH/VIH hormone family. In terms of tissue distribution, expressed by the venom gland.

The protein resides in the secreted. Its function is as follows. May increase the toxicity of alpha-latrotoxin and/or other venom components. Is non-toxic to mice and to the cockroach Periplaneta americana. This is Alpha-latrotoxin associated low molecular weight protein SGV242-280 from Steatoda grossa (False black widow).